Here is a 259-residue protein sequence, read N- to C-terminus: Ribosomal RNA large subunit methyltransferase E (259 aa).

5 residues coordinate S-adenosyl-L-methionine: G58, W60, D78, D96, and D120. The active-site Proton acceptor is the K160.

This sequence belongs to the class I-like SAM-binding methyltransferase superfamily. RNA methyltransferase RlmE family.

It localises to the cytoplasm. The catalysed reaction is uridine(2552) in 23S rRNA + S-adenosyl-L-methionine = 2'-O-methyluridine(2552) in 23S rRNA + S-adenosyl-L-homocysteine + H(+). Functionally, specifically methylates the uridine in position 2552 of 23S rRNA at the 2'-O position of the ribose in the fully assembled 50S ribosomal subunit. The polypeptide is Ribosomal RNA large subunit methyltransferase E (Methanococcus vannielii (strain ATCC 35089 / DSM 1224 / JCM 13029 / OCM 148 / SB)).